The following is a 283-amino-acid chain: Homeobox protein BarH-like 2 (283 aa).

Disordered regions lie at residues 107-141 and 198-283; these read AAAA…RRSR and KGGQ…PPLS. Residues 122–132 show a composition bias toward polar residues; the sequence is SSESETEQPTP. A DNA-binding region (homeobox) is located at residues 139–198; it reads RSRTIFTELQLMGLEKKFQKQKYLSTPDRLDLAQSLGLTQLQVKTWYQNRRMKWKKMVLK. Residues 268 to 277 show a composition bias toward low complexity; the sequence is QPQELSEASS.

Belongs to the BAR homeobox family. As to expression, nervous system, particularly in the telencephalon, spinal cord, and dorsal root ganglia.

It is found in the nucleus. Functionally, transcription factor. Binds optimally to the DNA consensus sequence 5'-YYTAATGRTTTTY-3'. May control the expression of neural adhesion molecules such as L1 or Ng-CAM during embryonic development of both the central and peripherical nervous system. May be involved in controlling adhesive processes in keratinizing epithelia. The sequence is that of Homeobox protein BarH-like 2 (Barx2) from Mus musculus (Mouse).